A 213-amino-acid polypeptide reads, in one-letter code: Probable glutathione S-transferase DHAR1, cytosolic (213 aa).

Lysine 8 and aspartate 19 together coordinate glutathione. The L-ascorbate site is built by lysine 8 and aspartate 19. The GST N-terminal domain occupies 10–89; it reads AVGHPDTLGD…VIEEKYPTPS (80 aa). Cysteine 20 (nucleophile) is an active-site residue. Glutathione-binding residues include lysine 47, valine 60, serine 74, histidine 160, and tryptophan 207. Positions 73-213 constitute a GST C-terminal domain; sequence DSDVITQVIE…IAGWAPKVNA (141 aa). Lysine 210 serves as a coordination point for L-ascorbate.

It belongs to the GST superfamily. DHAR family. In terms of assembly, monomer.

Its subcellular location is the cytoplasm. It is found in the cytosol. The catalysed reaction is RX + glutathione = an S-substituted glutathione + a halide anion + H(+). It catalyses the reaction L-dehydroascorbate + 2 glutathione = glutathione disulfide + L-ascorbate. Its function is as follows. Involved in ascorbate homeostasis. Maintains redox pools of ascorbate by recycling dihydroascorbate (DHA) to ascorbate. Involved in scavenging reactive oxygen species (ROS) under oxidative stresses. Possesses dehydroascorbate reductase (DHAR) activity in vitro. May function via a ping-pong reaction mechanism with an electron transfer at the active site. Possesses chaperone-like activity in vitro. This is Probable glutathione S-transferase DHAR1, cytosolic from Oryza sativa subsp. japonica (Rice).